Consider the following 859-residue polypeptide: Anoctamin-7 (859 aa).

Topologically, residues 1-297 (MLRGQAREED…YFAWLGFYTG (297 aa)) are cytoplasmic. The tract at residues 25-50 (GCSYGSTAQASEAGKQQVAPSRVGSS) is disordered. The chain crosses the membrane as a helical span at residues 298–318 (WLLPAAVVGTVVFLVGCFLVF). Residues 319-362 (SDIPTQELCHSSDSFDMCPLCSDCSFWLLSSACTLAQAGRLFDH) lie on the Extracellular side of the membrane. Residues 363–383 (GGTVFFSLFMALWAVLLLEYW) traverse the membrane as a helical segment. Over 384-441 (KRKNATLAYRWDCSDYEDIEERPRPQFAATAPMTALNPITGEDEPYFPEKNRVRRMLA) the chain is Cytoplasmic. Residues 442–462 (GSVVLLMMVAVVIMCLVSVIL) form a helical membrane-spanning segment. Over 463 to 492 (YRAVMAIIVSRSDNAFLSAWASRIASLTGS) the chain is Extracellular. The chain crosses the membrane as a helical span at residues 493 to 513 (VVNLVFILILSKVYVLLAQVL). Residues 514-530 (TRWEMHRTQTEFEDAFT) are Cytoplasmic-facing. Residues 531–551 (LKVFIFQFVNFYASPVYIAFF) form a helical membrane-spanning segment. Over 552–651 (KGRFVGYPGN…FHEYLEMVLQ (100 aa)) the chain is Extracellular. Residues 652–672 (FGFVTIFVAACPLAPLFALLN) traverse the membrane as a helical segment. At 673–700 (NWVEIRLDARKFVCEYRRPVAERAQDIG) the chain is on the cytoplasmic side. A helical membrane pass occupies residues 701–721 (IWFHILTGLTHLAVISNAFLL). The Extracellular portion of the chain corresponds to 722–780 (AFSSDFLPRVYYSWTHAPDLHGFLNFTLARAPPTFTSAHNRTCRYRAFRDDDGHYSPTY). N746 and N761 each carry an N-linked (GlcNAc...) asparagine glycan. A helical membrane pass occupies residues 781-801 (WTLLAIRLAFVIVFEHVVFSI). The Cytoplasmic segment spans residues 802–859 (GRVLDLLVPDIPESVEIKVKREYYLAKQALAENEALLGATGVKDDQPPSSEPSLGLPA).

This sequence belongs to the anoctamin family. Highly expressed in the stomach. Expressed at low levels in small intestine and large intestine.

It is found in the cell membrane. Its subcellular location is the endoplasmic reticulum. It catalyses the reaction a 1,2-diacyl-sn-glycero-3-phospho-L-serine(in) = a 1,2-diacyl-sn-glycero-3-phospho-L-serine(out). The catalysed reaction is a beta-D-galactosyl-(1&lt;-&gt;1')-N-acylsphing-4-enine(out) = a beta-D-galactosyl-(1&lt;-&gt;1')-N-acylsphing-4-enine(in). It carries out the reaction a 1,2-diacyl-sn-glycero-3-phosphocholine(in) = a 1,2-diacyl-sn-glycero-3-phosphocholine(out). In terms of biological role, has calcium-dependent phospholipid scramblase activity; scrambles phosphatidylserine, phosphatidylcholine and galactosylceramide. Does not exhibit calcium-activated chloride channel (CaCC) activity. May play a role in cell-cell interactions. This is Anoctamin-7 (Ano7) from Mus musculus (Mouse).